The following is a 60-amino-acid chain: Potassium channel toxin alpha-KTx 29.3 (60 aa).

The signal sequence occupies residues 1 to 28 (MKSVCGVLIILVVLTTMLSISTFSTVGA). 3 disulfide bridges follow: Cys32/Cys51, Cys40/Cys56, and Cys44/Cys58.

The protein belongs to the short scorpion toxin superfamily. Potassium channel inhibitor family. Alpha-KTx 29 subfamily. Expressed by the venom gland.

It localises to the secreted. Weakly inhibits the Kv1.3/KCNA3 channel (1 uM of thetoxin inhibits currents by 13.2%) and Kv7.1/KCNQ1 channel (10 uM of the toxin inhibits currents by 27.7%). This chain is Potassium channel toxin alpha-KTx 29.3, found in Lychas mucronatus (Chinese swimming scorpion).